Reading from the N-terminus, the 286-residue chain is ATP synthase gamma chain (286 aa).

Belongs to the ATPase gamma chain family. As to quaternary structure, F-type ATPases have 2 components, CF(1) - the catalytic core - and CF(0) - the membrane proton channel. CF(1) has five subunits: alpha(3), beta(3), gamma(1), delta(1), epsilon(1). CF(0) has three main subunits: a, b and c.

The protein resides in the cell inner membrane. In terms of biological role, produces ATP from ADP in the presence of a proton gradient across the membrane. The gamma chain is believed to be important in regulating ATPase activity and the flow of protons through the CF(0) complex. The protein is ATP synthase gamma chain of Fuscovulum blasticum (Rhodobacter blasticus).